Consider the following 184-residue polypeptide: Elongation factor P (184 aa).

Belongs to the elongation factor P family.

Its subcellular location is the cytoplasm. The protein operates within protein biosynthesis; polypeptide chain elongation. Involved in peptide bond synthesis. Stimulates efficient translation and peptide-bond synthesis on native or reconstituted 70S ribosomes in vitro. Probably functions indirectly by altering the affinity of the ribosome for aminoacyl-tRNA, thus increasing their reactivity as acceptors for peptidyl transferase. This chain is Elongation factor P, found in Leptothrix cholodnii (strain ATCC 51168 / LMG 8142 / SP-6) (Leptothrix discophora (strain SP-6)).